A 260-amino-acid chain; its full sequence is E3 ubiquitin-protein ligase SRFP1 (260 aa).

The CHY-type zinc finger occupies 11 to 80 (FGRMGFGCKH…VAQVCYNCGV (70 aa)). The Zn(2+) site is built by Cys-18, His-20, Cys-31, Cys-32, Cys-38, Cys-41, His-42, His-50, Cys-62, Cys-65, Cys-75, Cys-78, Cys-87, Cys-90, His-103, Cys-104, Cys-107, Cys-110, His-120, Cys-121, Cys-124, Cys-127, His-136, and Cys-138. A CTCHY-type zinc finger spans residues 82-146 (MGEYFCSACK…CCIENSMKNN (65 aa)). An RING-type; atypical zinc finger spans residues 147-190 (CPICYEYLFDSLRETSVLRCGHTMHLQCFHEMLKHDKFSCPICS).

In terms of tissue distribution, expressed in roots, leaves, nodes and panicles.

It localises to the nucleus. It is found in the cytoplasm. The catalysed reaction is S-ubiquitinyl-[E2 ubiquitin-conjugating enzyme]-L-cysteine + [acceptor protein]-L-lysine = [E2 ubiquitin-conjugating enzyme]-L-cysteine + N(6)-ubiquitinyl-[acceptor protein]-L-lysine.. It functions in the pathway protein modification; protein ubiquitination. Its function is as follows. Possesses E3 ubiquitin-protein ligase activity in vitro. Possesses transactivation activity in yeast cells. May modulate abiotic stress responses by negatively regulating antioxidant enzymes-mediated reactive oxygen species (ROS) removal. This is E3 ubiquitin-protein ligase SRFP1 from Oryza sativa subsp. japonica (Rice).